An 82-amino-acid polypeptide reads, in one-letter code: Penaeidin-3a (82 aa).

An N-terminal signal peptide occupies residues 1–19 (MRLVVCLVFLASFALVCQG). The residue at position 20 (Q20) is a Pyrrolidone carboxylic acid. Cystine bridges form between C51–C66, C55–C73, and C67–C74. At S81 the chain carries Serine amide.

Post-translationally, the N-terminus forms pyrrolidone carboxylic acid. Higher expression in hemocytes and to a lesser extent in heart, testis, gills, intestine, lymphoid organ and hepatopancreas. Traces in eyes and subcuticular epithelium. Not present in the brain.

Its subcellular location is the cytoplasmic granule. Its function is as follows. Antibacterial activity against M.luteus and E.coli bacteria. Antifungal activity against N.crassa and F.oxysporum. Presents chitin-binding activity. This chain is Penaeidin-3a, found in Penaeus vannamei (Whiteleg shrimp).